A 181-amino-acid polypeptide reads, in one-letter code: NADH-quinone oxidoreductase subunit B 2 (181 aa).

[4Fe-4S] cluster-binding residues include Cys-44, Cys-45, Cys-110, and Cys-139.

Belongs to the complex I 20 kDa subunit family. As to quaternary structure, NDH-1 is composed of 14 different subunits. Subunits NuoB, C, D, E, F, and G constitute the peripheral sector of the complex. The cofactor is [4Fe-4S] cluster.

It localises to the cell inner membrane. It carries out the reaction a quinone + NADH + 5 H(+)(in) = a quinol + NAD(+) + 4 H(+)(out). In terms of biological role, NDH-1 shuttles electrons from NADH, via FMN and iron-sulfur (Fe-S) centers, to quinones in the respiratory chain. The immediate electron acceptor for the enzyme in this species is believed to be a menaquinone. Couples the redox reaction to proton translocation (for every two electrons transferred, four hydrogen ions are translocated across the cytoplasmic membrane), and thus conserves the redox energy in a proton gradient. The protein is NADH-quinone oxidoreductase subunit B 2 of Cytophaga hutchinsonii (strain ATCC 33406 / DSM 1761 / CIP 103989 / NBRC 15051 / NCIMB 9469 / D465).